The primary structure comprises 101 residues: Conopressin/conophysin, isoform 3 (101 aa).

A1 is a signal peptide. A disulfide bridge links C2 with C7. A Glycine amide modification is found at G10. The propeptide occupies 11–18 (GKRNVDEG). 7 disulfide bridges follow: C23–C63, C26–C37, C31–C53, C38–C43, C70–C88, C82–C100, and C89–C94.

Belongs to the vasopressin/oxytocin family. In terms of tissue distribution, expressed by the venom gland.

The protein localises to the secreted. Functionally, targets vasopressin-oxytocin related receptors. Is more active on fish receptors than on their human counterparts, supporting an evolved role of this conopressin in the envenomation process. Acts as an agonist on zebrafish vasopressin receptors V1a1R (EC(50)=10.6 nM), V1a2R (EC(50)=44.06 nM, partial agonist), V2R (EC(50)=299.2 nM) and oxytocin receptor (EC(50)=353.73 nM, partial agonist). Shows a weaker activity on human receptors AVPR1B (EC(50)=51.92 nM), AVPR1A (EC(50)=123.78 nM), AVPR2 (EC(50)=299.2 nM) and oxytocin (OXTR) receptor (EC(50)=455.66 nM, partial agonist). In vivo, exhibits grooming and scratching behavior in mice, following intracerebral injection. This Conus monile (Necklace cone) protein is Conopressin/conophysin, isoform 3.